We begin with the raw amino-acid sequence, 518 residues long: Protein nucleotidyltransferase YdiU (518 aa).

The segment at 1 to 22 is disordered; sequence MTHLQFDNRLRAELPGDPEEGP. ATP is bound by residues Gly100, Gly102, Arg103, Lys123, Asp135, Gly136, Arg193, and Arg200. The active-site Proton acceptor is Asp270. Mg(2+)-binding residues include Asn271 and Asp280. ATP is bound at residue Asp280.

This sequence belongs to the SELO family. Requires Mg(2+) as cofactor. Mn(2+) is required as a cofactor.

It carries out the reaction L-seryl-[protein] + ATP = 3-O-(5'-adenylyl)-L-seryl-[protein] + diphosphate. The enzyme catalyses L-threonyl-[protein] + ATP = 3-O-(5'-adenylyl)-L-threonyl-[protein] + diphosphate. The catalysed reaction is L-tyrosyl-[protein] + ATP = O-(5'-adenylyl)-L-tyrosyl-[protein] + diphosphate. It catalyses the reaction L-histidyl-[protein] + UTP = N(tele)-(5'-uridylyl)-L-histidyl-[protein] + diphosphate. It carries out the reaction L-seryl-[protein] + UTP = O-(5'-uridylyl)-L-seryl-[protein] + diphosphate. The enzyme catalyses L-tyrosyl-[protein] + UTP = O-(5'-uridylyl)-L-tyrosyl-[protein] + diphosphate. Its function is as follows. Nucleotidyltransferase involved in the post-translational modification of proteins. It can catalyze the addition of adenosine monophosphate (AMP) or uridine monophosphate (UMP) to a protein, resulting in modifications known as AMPylation and UMPylation. This Xanthomonas campestris pv. campestris (strain 8004) protein is Protein nucleotidyltransferase YdiU.